The chain runs to 148 residues: uncharacterized protein (148 aa).

[4Fe-4S] cluster-binding residues include Cys21, Cys24, Cys88, and Cys117.

It belongs to the complex I 20 kDa subunit family. [4Fe-4S] cluster is required as a cofactor.

This is an uncharacterized protein from Methanocaldococcus jannaschii (strain ATCC 43067 / DSM 2661 / JAL-1 / JCM 10045 / NBRC 100440) (Methanococcus jannaschii).